The chain runs to 417 residues: NADH-quinone oxidoreductase subunit D (417 aa).

The protein belongs to the complex I 49 kDa subunit family. As to quaternary structure, NDH-1 is composed of 14 different subunits. Subunits NuoB, C, D, E, F, and G constitute the peripheral sector of the complex.

It is found in the cell inner membrane. It carries out the reaction a quinone + NADH + 5 H(+)(in) = a quinol + NAD(+) + 4 H(+)(out). In terms of biological role, NDH-1 shuttles electrons from NADH, via FMN and iron-sulfur (Fe-S) centers, to quinones in the respiratory chain. The immediate electron acceptor for the enzyme in this species is believed to be ubiquinone. Couples the redox reaction to proton translocation (for every two electrons transferred, four hydrogen ions are translocated across the cytoplasmic membrane), and thus conserves the redox energy in a proton gradient. This chain is NADH-quinone oxidoreductase subunit D, found in Ruthia magnifica subsp. Calyptogena magnifica.